The following is a 90-amino-acid chain: Acylphosphatase (90 aa).

One can recognise an Acylphosphatase-like domain in the interval glutamine 3–arginine 90. Active-site residues include arginine 18 and asparagine 36.

The protein belongs to the acylphosphatase family.

It catalyses the reaction an acyl phosphate + H2O = a carboxylate + phosphate + H(+). This chain is Acylphosphatase (acyP), found in Actinobacillus pleuropneumoniae serotype 5b (strain L20).